Consider the following 377-residue polypeptide: Homocitrate synthase 1 (377 aa).

The region spanning 4–255 is the Pyruvate carboxyltransferase domain; sequence VLINDTTLRD…DMGIDTPRLL (252 aa).

It belongs to the alpha-IPM synthase/homocitrate synthase family.

It carries out the reaction acetyl-CoA + 2-oxoglutarate + H2O = (2R)-homocitrate + CoA + H(+). Its function is as follows. This protein is a Fe-Mo-cofactor biosynthetic component. The protein is Homocitrate synthase 1 (nifV1) of Nostoc sp. (strain PCC 7120 / SAG 25.82 / UTEX 2576).